The primary structure comprises 377 residues: Protein MULTIPOLAR SPINDLE 1 (377 aa).

The short motif at 117–124 (LRRRFLRL) is the Nuclear localization signal element.

As to expression, expressed in roots, stems, leaves, inflorescences and seedlings. Strongly expressed in meiocytes.

It is found in the nucleus. The protein resides in the cytoplasm. It localises to the cytoskeleton. The protein localises to the spindle. Its function is as follows. Involved in meiotic spindle organization in meiocytes thus regulating chromosome segregation. Required for formation of meiotic DNA double-strand breaks (DSBs) during early recombination processes. The protein is Protein MULTIPOLAR SPINDLE 1 of Arabidopsis thaliana (Mouse-ear cress).